We begin with the raw amino-acid sequence, 43 residues long: Protein PsbN (43 aa).

A helical transmembrane segment spans residues 4-24 (ATFVAIFISCLLISFTGYALY).

Belongs to the PsbN family.

The protein resides in the plastid. It is found in the chloroplast thylakoid membrane. Functionally, may play a role in photosystem I and II biogenesis. The protein is Protein PsbN of Marchantia polymorpha (Common liverwort).